The following is a 65-amino-acid chain: Large ribosomal subunit protein bL35 (65 aa).

It belongs to the bacterial ribosomal protein bL35 family.

The protein is Large ribosomal subunit protein bL35 of Porphyromonas gingivalis (strain ATCC 33277 / DSM 20709 / CIP 103683 / JCM 12257 / NCTC 11834 / 2561).